Consider the following 372-residue polypeptide: Cytoplasmic tRNA 2-thiolation protein 1 (372 aa).

The disordered stretch occupies residues 335-372 (GKKEDGGCGSGGGGCGCAGAADETENEETRKRLKDLQF). Gly residues predominate over residues 341 to 351 (GCGSGGGGCGC). A compositionally biased stretch (basic and acidic residues) spans 361–372 (EETRKRLKDLQF).

It belongs to the TtcA family. CTU1/NCS6/ATPBD3 subfamily.

The protein localises to the cytoplasm. The protein operates within tRNA modification; 5-methoxycarbonylmethyl-2-thiouridine-tRNA biosynthesis. In terms of biological role, plays a central role in 2-thiolation of mcm(5)S(2)U at tRNA wobble positions of tRNA(Lys), tRNA(Glu) and tRNA(Gln). Directly binds tRNAs and probably acts by catalyzing adenylation of tRNAs, an intermediate required for 2-thiolation. It is unclear whether it acts as a sulfurtransferase that transfers sulfur from thiocarboxylated URM1 onto the uridine of tRNAs at wobble position. This Caenorhabditis briggsae protein is Cytoplasmic tRNA 2-thiolation protein 1.